Reading from the N-terminus, the 874-residue chain is Protein Son (874 aa).

Disordered regions lie at residues 1–45, 68–98, and 120–368; these read MTEN…ERPD, RRSNSNELGNNDESGESESSASADDKKNIKP, and ELLD…SRDL. A compositionally biased stretch (polar residues) spans 12-24; sequence ETPQVAGSQTNPP. Residues 70–89 are compositionally biased toward low complexity; it reads SNSNELGNNDESGESESSAS. Basic residues-rich tracts occupy residues 128-147 and 162-175; these read KKKKKVKKEKKDKKAKKKKT and KHKHKRKKHKHKDI. Basic and acidic residues-rich tracts occupy residues 176 to 219 and 226 to 277; these read RVKD…KDKF and SEKE…ERVR. Residues 705-751 enclose the G-patch domain; sequence TGGMGMALLQKMGWKPGEGLGRCKTGSLQPLLLDVKLDKRGLVSRDD. Residues 800-870 enclose the DRBM domain; it reads HPVCVLNELT…AALCLRSLGI (71 aa).

Expressed in ovarian nurse cells (at protein level).

It is found in the nucleus. RNA-binding protein that protects nascent transcripts containing intronic transposable sequences, known as INE-1, from being degraded by DIP1. Modulates DIP1 activity by repressing its sumoylation levels. This ensures that intronic sequences will be degradated only after splicing. In the ovaries, regulates germline stem cells (GSCs) self-renewal by repressing the expression of the GSC differentiation-promoting factor Rga. The polypeptide is Protein Son (Drosophila melanogaster (Fruit fly)).